Reading from the N-terminus, the 377-residue chain is Glutamate 5-kinase (377 aa).

Residue Lys-18 participates in ATP binding. Residues Ser-55, Asp-142, and Asn-154 each coordinate substrate. ATP is bound by residues 174-175 and 216-222; these read SD and TGGMKSK. Positions 281–359 constitute a PUA domain; that stretch reads QGEVVVDAGA…REIEALLGYK (79 aa).

The protein belongs to the glutamate 5-kinase family.

It localises to the cytoplasm. The enzyme catalyses L-glutamate + ATP = L-glutamyl 5-phosphate + ADP. The protein operates within amino-acid biosynthesis; L-proline biosynthesis; L-glutamate 5-semialdehyde from L-glutamate: step 1/2. In terms of biological role, catalyzes the transfer of a phosphate group to glutamate to form L-glutamate 5-phosphate. The polypeptide is Glutamate 5-kinase (Meiothermus ruber).